The primary structure comprises 450 residues: Flavin-containing monooxygenase FMO GS-OX-like 5 (450 aa).

17–22 contributes to the FAD binding site; that stretch reads GAGPAG. 215–220 contacts NADP(+); sequence GNSSSA.

Belongs to the FMO family. FAD is required as a cofactor.

Catalyzes the conversion of methylthioalkyl glucosinolates of any chain length into methylsulfinylalkyl glucosinolates. The chain is Flavin-containing monooxygenase FMO GS-OX-like 5 from Arabidopsis thaliana (Mouse-ear cress).